The following is an 88-amino-acid chain: Large ribosomal subunit protein bL27 (88 aa).

The tract at residues 1–22 (MAHKKGASSSRNGRDSNAQRLG) is disordered. Residues 7–19 (ASSSRNGRDSNAQ) are compositionally biased toward polar residues.

This sequence belongs to the bacterial ribosomal protein bL27 family.

The sequence is that of Large ribosomal subunit protein bL27 from Mycolicibacterium gilvum (strain PYR-GCK) (Mycobacterium gilvum (strain PYR-GCK)).